Reading from the N-terminus, the 670-residue chain is Solute carrier organic anion transporter family member 1A6 (670 aa).

Residues 1 to 20 lie on the Cytoplasmic side of the membrane; sequence MGEPEKRAGTHGIRCFAKIK. A helical transmembrane segment spans residues 21 to 40; sequence VFLLALTWAYASKALSATYM. Residues 41–59 are Extracellular-facing; the sequence is NSMLTQIERRFNISTSIVG. N-linked (GlcNAc...) asparagine glycosylation is present at Asn52. A helical membrane pass occupies residues 60 to 80; that stretch reads LINGSFEVGNLLLIIFVSYFG. At 81–86 the chain is on the cytoplasmic side; sequence RKRHRP. A helical transmembrane segment spans residues 87 to 111; it reads IMIGIGCAVMGLGCFIISLPHFLMG. The Extracellular segment spans residues 112 to 155; that stretch reads RYEYETTISPTSNLSSNSFLCMENRTQTLKPTQDPAECVKEMKS. Asn124 and Asn135 each carry an N-linked (GlcNAc...) asparagine glycan. A helical transmembrane segment spans residues 156-184; sequence LMWIYVLVGNIIRGIGETPIMPLGISYIE. Topologically, residues 185 to 203 are cytoplasmic; the sequence is DFAKSENSPFYIGILEVGK. The chain crosses the membrane as a helical span at residues 204 to 224; it reads ITGPIAAIWLGSFCATIYVDM. Residues 225–242 lie on the Extracellular side of the membrane; the sequence is GSVNTDDLTITPTDTRCV. The chain crosses the membrane as a helical span at residues 243–267; the sequence is GAWWIGFLVCAGLNILISIPFFFFP. Topologically, residues 268–311 are cytoplasmic; it reads KTFPKEGPEDMANETKNDEGDKHREKAKEEKRGITKDFFLFMKS. The tract at residues 276–295 is disordered; it reads EDMANETKNDEGDKHREKAK. A helical transmembrane segment spans residues 312–333; sequence LSCNPIYMLCVLTSVLQVNGFV. The Extracellular segment spans residues 334–353; sequence SIFTFKPKYLEHHYGKSSSE. The helical transmembrane segment at 354–377 threads the bilayer; that stretch reads AIFLMGLYTLPSVCVGYLISGFIM. Over 378–381 the chain is Cytoplasmic; that stretch reads KKFK. The chain crosses the membrane as a helical span at residues 382–405; that stretch reads ITLKKAAFISYCLGMSECLLSLCN. Residues 406 to 513 are Extracellular-facing; sequence FMLTCDNVPI…PDCANKLQYF (108 aa). Residues 433-488 enclose the Kazal-like domain; that stretch reads NTVLADCNTRCSCLTKTWDPVCGDNGLAYITPCLAGCEKSVGSGINMVLQDCSCIQ. Intrachain disulfides connect Cys439-Cys469, Cys445-Cys465, and Cys454-Cys486. The N-linked (GlcNAc...) asparagine glycan is linked to Asn492. A helical transmembrane segment spans residues 514–536; it reads LIITVFCSFFYSLSLIPGYMIFL. Topologically, residues 537–545 are cytoplasmic; sequence RCMKSEEKS. Residues 546-571 traverse the membrane as a helical segment; sequence LGIGLQAFCMRILGGILAPIYFGVLI. The Extracellular portion of the chain corresponds to 572–605; it reads DRTCLHWGTQKCGEPGACRTYEINSFRSIYLGLP. Residues 606-623 traverse the membrane as a helical segment; it reads AALRGSSYLPAFFILRLM. The Cytoplasmic portion of the chain corresponds to 624–670; the sequence is RKFQFPGDINSPVTDHVEMMLTEKESEHTDVHRSPQVENDGELKTKL. Ser634 is modified (phosphoserine). The tract at residues 647–670 is disordered; it reads KESEHTDVHRSPQVENDGELKTKL.

The protein belongs to the organo anion transporter (TC 2.A.60) family.

The protein localises to the cell membrane. Functionally, may mediate the Na(+)-independent transport of organic anions. This is Solute carrier organic anion transporter family member 1A6 (Slco1a6) from Rattus norvegicus (Rat).